The following is a 193-amino-acid chain: Auxin-induced protein 22D (193 aa).

Residues 16–68 (ATELRLGLPGSDEPEKRATARSNKRSSPEASDEESISNGSDVTKEDNVVPPAK) form a disordered region. Positions 19 to 23 (LRLGL) match the EAR-like (transcriptional repression) motif. The PB1 domain maps to 97–184 (GMYVKVSMAG…SCKRLRIMKG (88 aa)).

This sequence belongs to the Aux/IAA family. In terms of assembly, homodimers and heterodimers.

Its subcellular location is the nucleus. In terms of biological role, aux/IAA proteins are short-lived transcriptional factors that function as repressors of early auxin response genes at low auxin concentrations. Repression is thought to result from the interaction with auxin response factors (ARFs), proteins that bind to the auxin-responsive promoter element (AuxRE). Formation of heterodimers with ARF proteins may alter their ability to modulate early auxin response genes expression. The polypeptide is Auxin-induced protein 22D (AUX22D) (Vigna radiata var. radiata (Mung bean)).